The following is a 612-amino-acid chain: UBA domain-containing protein 6 (612 aa).

Residues 3 to 42 (DLDTKIKTLKNMGVSESDAKDSLERCGYDVESAAEFIFSG) form the UBA domain. Phosphoserine is present on Ser595.

It is found in the cytoplasm. The protein resides in the nucleus. The sequence is that of UBA domain-containing protein 6 (ucp6) from Schizosaccharomyces pombe (strain 972 / ATCC 24843) (Fission yeast).